The primary structure comprises 355 residues: tRNA-specific 2-thiouridylase MnmA (355 aa).

Residues 7-14 and L33 contribute to the ATP site; that span reads GLSGGVDS. C94 acts as the Nucleophile in catalysis. C94 and C193 form a disulfide bridge. G119 contributes to the ATP binding site. The tract at residues 143 to 145 is interaction with tRNA; it reads KDQ. The Cysteine persulfide intermediate role is filled by C193. An interaction with tRNA region spans residues 298 to 299; that stretch reads RY.

This sequence belongs to the MnmA/TRMU family.

It localises to the cytoplasm. It catalyses the reaction S-sulfanyl-L-cysteinyl-[protein] + uridine(34) in tRNA + AH2 + ATP = 2-thiouridine(34) in tRNA + L-cysteinyl-[protein] + A + AMP + diphosphate + H(+). In terms of biological role, catalyzes the 2-thiolation of uridine at the wobble position (U34) of tRNA, leading to the formation of s(2)U34. In Acaryochloris marina (strain MBIC 11017), this protein is tRNA-specific 2-thiouridylase MnmA.